Consider the following 144-residue polypeptide: IgW chain C region, secreted form 1/3 (144 aa).

Residues 1–82 (VYNQTTAVLG…AGSRFNDRIS (82 aa)) enclose the Ig-like domain. 3 N-linked (GlcNAc...) asparagine glycosylation sites follow: Asn3, Asn43, and Asn123. The cysteines at positions 11 and 68 are disulfide-linked. A secretory tail region spans residues 87-144 (KGGTINLPVPGGNTPCTCPPCSCSGCMPKLVYQTDLNVTLENGGQLQYNCHQQACKIK).

As to expression, expressed mainly in lymphoid tissues including spleen, epigonal organ and circulating lymphocytes.

Its subcellular location is the secreted. The sequence is that of IgW chain C region, secreted form 1/3 from Heterodontus francisci (Horn shark).